The sequence spans 229 residues: MSKAVVVFSGGQDSTTCLIQALQQFDEVHGITFDYGQRHREEIEIAKELATNLKLASHKVMDVTLLNELAISALTRDSIPVSNELMDNGLPNTFVPGRNILFLTLAGIYAYQLGADTVITGVCETDFSGYPDCRNDFVKAMQAALEQGMDKKLTIQTPLMWLDKAETWALADKFDSLELVRNETLTCYNGIKGDGCGTCPACLLRKRGLEEYLADKEAIQARLSAKCEN.

Residue 8 to 18 (FSGGQDSTTCL) coordinates ATP. Zn(2+)-binding residues include C187, C196, C199, and C202.

This sequence belongs to the QueC family. Zn(2+) serves as cofactor.

It carries out the reaction 7-carboxy-7-deazaguanine + NH4(+) + ATP = 7-cyano-7-deazaguanine + ADP + phosphate + H2O + H(+). It functions in the pathway purine metabolism; 7-cyano-7-deazaguanine biosynthesis. In terms of biological role, catalyzes the ATP-dependent conversion of 7-carboxy-7-deazaguanine (CDG) to 7-cyano-7-deazaguanine (preQ(0)). This chain is 7-cyano-7-deazaguanine synthase, found in Shewanella halifaxensis (strain HAW-EB4).